The following is a 156-amino-acid chain: Transcription elongation factor GreA (156 aa).

The stretch at 1-32 (MKKVRLTREGYEKLKKELEDLKRKFMYEISER) forms a coiled coil.

This sequence belongs to the GreA/GreB family.

Functionally, necessary for efficient RNA polymerase transcription elongation past template-encoded arresting sites. The arresting sites in DNA have the property of trapping a certain fraction of elongating RNA polymerases that pass through, resulting in locked ternary complexes. Cleavage of the nascent transcript by cleavage factors such as GreA or GreB allows the resumption of elongation from the new 3'terminus. GreA releases sequences of 2 to 3 nucleotides. This is Transcription elongation factor GreA from Thermotoga petrophila (strain ATCC BAA-488 / DSM 13995 / JCM 10881 / RKU-1).